The chain runs to 284 residues: Flavin-dependent thymidylate synthase (284 aa).

Residues 27-237 (GFIRVVDYMG…PLAYNAFVEY (211 aa)) form the ThyX domain. Residues Thr73, 96 to 98 (RHR), and Glu104 each bind FAD. Residues 93-96 (QWIR) and 104-108 (EYSAR) contribute to the dUMP site. The ThyX motif signature appears at 96-106 (RHRTANVNEYS). Residues 122 to 142 (EQVAKQSDNNKQGSGEAFDPD) are disordered. Positions 125-134 (AKQSDNNKQG) are enriched in polar residues. Arg176 contributes to the dUMP binding site. FAD is bound by residues 192 to 194 (DLH) and His198. Arg203 serves as a coordination point for dUMP. Arg203 (involved in ionization of N3 of dUMP, leading to its activation) is an active-site residue.

Belongs to the thymidylate synthase ThyX family. In terms of assembly, homotetramer. It depends on FAD as a cofactor.

It catalyses the reaction dUMP + (6R)-5,10-methylene-5,6,7,8-tetrahydrofolate + NADPH + H(+) = dTMP + (6S)-5,6,7,8-tetrahydrofolate + NADP(+). The protein operates within pyrimidine metabolism; dTTP biosynthesis. In terms of biological role, catalyzes the reductive methylation of 2'-deoxyuridine-5'-monophosphate (dUMP) to 2'-deoxythymidine-5'-monophosphate (dTMP) while utilizing 5,10-methylenetetrahydrofolate (mTHF) as the methyl donor, and NADPH and FADH(2) as the reductant. This chain is Flavin-dependent thymidylate synthase, found in Wolbachia pipientis wMel.